Consider the following 344-residue polypeptide: Nicotinate-nucleotide--dimethylbenzimidazole phosphoribosyltransferase (344 aa).

The active-site Proton acceptor is Glu-310.

Belongs to the CobT family.

The catalysed reaction is 5,6-dimethylbenzimidazole + nicotinate beta-D-ribonucleotide = alpha-ribazole 5'-phosphate + nicotinate + H(+). It functions in the pathway nucleoside biosynthesis; alpha-ribazole biosynthesis; alpha-ribazole from 5,6-dimethylbenzimidazole: step 1/2. Its function is as follows. Catalyzes the synthesis of alpha-ribazole-5'-phosphate from nicotinate mononucleotide (NAMN) and 5,6-dimethylbenzimidazole (DMB). In Shewanella amazonensis (strain ATCC BAA-1098 / SB2B), this protein is Nicotinate-nucleotide--dimethylbenzimidazole phosphoribosyltransferase.